Reading from the N-terminus, the 474-residue chain is Aspartyl/glutamyl-tRNA(Asn/Gln) amidotransferase subunit B (474 aa).

This sequence belongs to the GatB/GatE family. GatB subfamily. Heterotrimer of A, B and C subunits.

It carries out the reaction L-glutamyl-tRNA(Gln) + L-glutamine + ATP + H2O = L-glutaminyl-tRNA(Gln) + L-glutamate + ADP + phosphate + H(+). The catalysed reaction is L-aspartyl-tRNA(Asn) + L-glutamine + ATP + H2O = L-asparaginyl-tRNA(Asn) + L-glutamate + ADP + phosphate + 2 H(+). Allows the formation of correctly charged Asn-tRNA(Asn) or Gln-tRNA(Gln) through the transamidation of misacylated Asp-tRNA(Asn) or Glu-tRNA(Gln) in organisms which lack either or both of asparaginyl-tRNA or glutaminyl-tRNA synthetases. The reaction takes place in the presence of glutamine and ATP through an activated phospho-Asp-tRNA(Asn) or phospho-Glu-tRNA(Gln). This chain is Aspartyl/glutamyl-tRNA(Asn/Gln) amidotransferase subunit B, found in Helicobacter hepaticus (strain ATCC 51449 / 3B1).